The chain runs to 202 residues: Hypoxanthine-guanine phosphoribosyltransferase (202 aa).

Residues K66 and G67 each contribute to the diphosphate site. Positions 122 and 123 each coordinate Mg(2+). Residue D126 is the Proton acceptor of the active site. GMP-binding positions include K154, 175-176 (FV), and D182. R188 is a binding site for diphosphate.

Belongs to the purine/pyrimidine phosphoribosyltransferase family. Homodimer and homotetramer in equilibrium. The presence or absence of divalent metal ions, as well as phosphate, can affect the oligomerization state of the enzyme. Likely functions as a tetramer (rather than a dimer) in its biological environment, which is the most active form. The dimeric structure is also active though ~50% of that of the tetramer. Mg(2+) is required as a cofactor.

It localises to the cytoplasm. It carries out the reaction IMP + diphosphate = hypoxanthine + 5-phospho-alpha-D-ribose 1-diphosphate. The catalysed reaction is GMP + diphosphate = guanine + 5-phospho-alpha-D-ribose 1-diphosphate. It functions in the pathway purine metabolism; IMP biosynthesis via salvage pathway; IMP from hypoxanthine: step 1/1. The protein operates within purine metabolism; GMP biosynthesis via salvage pathway; GMP from guanine: step 1/1. With respect to regulation, competitively inhibited by acyclic nucleoside phosphonates (ANPs) with Ki values as low as 0.69 uM. Prodrugs of these compounds arrest the growth of a virulent strain of M.tuberculosis with MIC50 values as low as 4.5 uM and possess low cytotoxicity in mammalian cells. Inhibited by pyrrolidine nucleoside bisphosphonates, which are also able to arrest the growth of virulent M.tuberculosis not only in its replicating phase but also in its latent phase, and to arrest the growth of M.tuberculosis in infected macrophages while having low cytotoxicity in mammalian cells. Purine salvage pathway enzyme that catalyzes the transfer of the ribosyl-5-phosphate group from 5-phospho-alpha-D-ribose 1-diphosphate (PRPP) to the N9 position of the 6-oxopurines hypoxanthine and guanine to form the corresponding ribonucleotides IMP (inosine 5'-monophosphate) and GMP (guanosine 5'-monophosphate), with the release of PPi. Thus, specifically recycles hypoxanthine and guanine imported from the external medium, and converts them to IMP and GMP, respectively. Cannot use xanthine as substrate. This Mycobacterium tuberculosis (strain ATCC 25618 / H37Rv) protein is Hypoxanthine-guanine phosphoribosyltransferase.